The primary structure comprises 673 residues: Polyadenylate-binding protein, cytoplasmic and nuclear (673 aa).

The disordered stretch occupies residues 1-39; that stretch reads MSAETATSPAPAAETPVAPAPATQTTPAEGAPTPAAAAP. 4 RRM domains span residues 46–124, 134–211, 227–304, and 330–407; these read ASLY…WSQR, GNIF…HHVG, TNVY…RAQT, and VNLY…LAQR. A disordered region spans residues 300–322; the sequence is GRAQTKSEREAELKKSHEEKRLE. Over residues 304–322 the composition is skewed to basic and acidic residues; the sequence is TKSEREAELKKSHEEKRLE. 2 disordered regions span residues 509 to 572 and 644 to 673; these read APGY…AGRL and WGKD…EKKE. The 78-residue stretch at 569–646 folds into the PABC domain; it reads AGRLDAQSLA…ALRVLAEWGK (78 aa).

This sequence belongs to the polyadenylate-binding protein type-1 family.

It localises to the cytoplasm. It is found in the nucleus. Its function is as follows. Binds the poly(A) tail of mRNA. Appears to be an important mediator of the multiple roles of the poly(A) tail in mRNA biogenesis, stability and translation. In the nucleus, involved in both mRNA cleavage and polyadenylation. Is also required for efficient mRNA export to the cytoplasm. Acts in concert with a poly(A)-specific nuclease (PAN) to affect poly(A) tail shortening, which may occur concomitantly with either nucleocytoplasmic mRNA transport or translational initiation. In the cytoplasm, stimulates translation initiation and regulates mRNA decay through translation termination-coupled poly(A) shortening, probably mediated by PAN. The sequence is that of Polyadenylate-binding protein, cytoplasmic and nuclear (PAB1) from Cryptococcus neoformans var. neoformans serotype D (strain B-3501A) (Filobasidiella neoformans).